A 797-amino-acid polypeptide reads, in one-letter code: Striatin-3 (797 aa).

Met-1 is modified (N-acetylmethionine). Gly residues-rich tracts occupy residues 1-12 and 33-43; these read MDELAGGGGGGP and GGNGAAGGGGP. The segment at 1–60 is disordered; that stretch reads MDELAGGGGGGPAMASPPRQQQGPGGNMSLSPGGNGAAGGGGPPATEGAGPAAGPELSRP. Low complexity predominate over residues 44–55; the sequence is PATEGAGPAAGP. The caveolin-binding stretch occupies residues 71–79; sequence YIQHEWARF. Positions 77 to 136 form a coiled coil; it reads ARFEMERAHWEVERAELQARIAFLQGERKGQENLKKDLVRRIKMLEYALKQERAKYHKLK. At Thr-150 the chain carries Phosphothreonine. The tract at residues 166-183 is calmodulin-binding; sequence QNSQLTWKQGRQLLRQYL. 5 positions are modified to phosphoserine: Ser-202, Ser-214, Ser-229, Ser-257, and Ser-335. Positions 313–336 are disordered; it reads DGEGAGEARSSGDGTEWDKDDLSP. WD repeat units follow at residues 478–517, 531–570, 584–623, 679–718, 721–760, and 767–796; these read SHFD…PAKK, AHIG…VDPY, AHTD…PCIC, QSSN…MIHS, AHLD…CVQE, and KLDE…AKVF.

It belongs to the WD repeat striatin family. As to quaternary structure, tetramerizes. Part of the core of STRIPAK complexes composed of PP2A catalytic and scaffolding subunits, the striatins (PP2A regulatory subunits), the striatin-associated proteins MOB4, STRIP1 and STRIP2, PDCD10 and members of the STE20 kinases, such as STK24 and STK26. The STRIPAK complex can be extended by adapter proteins such as SLMAP:SIKE1 or CTTNBP2NL. Interacts with CDC42BPB.

The protein resides in the cytoplasm. It is found in the membrane. In terms of biological role, calmodulin-binding scaffolding protein which is the center of the striatin-interacting phosphatase and kinase (STRIPAK) complexes. STRIPAK complexes have critical roles in protein (de)phosphorylation and are regulators of multiple signaling pathways including Hippo, MAPK, nuclear receptor and cytoskeleton remodeling. Different types of STRIPAK complexes are involved in a variety of biological processes such as cell growth, differentiation, apoptosis, metabolism and immune regulation. This is Striatin-3 (STRN3) from Bos taurus (Bovine).